The following is a 1194-amino-acid chain: Multidrug efflux ATP-binding/permease protein Rv0194 (1194 aa).

The next 6 helical transmembrane spans lie at 20–40 (LLLG…VPLV), 56–76 (LAPW…LMYV), 130–150 (LLFD…GVAV), 153–173 (WLSV…GLIA), 258–278 (FALG…FVAF), and 279–299 (WACL…LTIA). Positions 21 to 301 (LLGFGAALAG…LAGMLTIAQQ (281 aa)) constitute an ABC transmembrane type-1 1 domain. The ABC transporter 1 domain occupies 334-568 (LEFQRVSFGY…CPRYRELLSP (235 aa)). 367–374 (GAPGSGKS) serves as a coordination point for ATP. 6 helical membrane passes run 628-648 (ALSL…PLLI), 660-680 (VLSA…IRWV), 743-763 (LVVA…LLAI), 765-785 (ARLV…TWQF), 847-867 (LLAL…TLVL), and 878-898 (VISV…YTPI). The 283-residue stretch at 628-910 (ALSLLLVAVQ…LAQMFDDYQR (283 aa)) folds into the ABC transmembrane type-1 2 domain. Positions 942-1177 (VVFDAVHYSY…GGHYSRLWAA (236 aa)) constitute an ABC transporter 2 domain. 976–983 (GSTGSGKS) contacts ATP.

It belongs to the ABC transporter superfamily. Lipid exporter (TC 3.A.1.106) family.

The protein resides in the cell inner membrane. Its activity is regulated as follows. Efflux is inhibited by reserpine. In terms of biological role, overexpression in M.smegmatis increases resistance to erythromycin, ampicillin, novobiocin and vancomycin. It also reduces accumulation of ethidium bromide in the cell. The chain is Multidrug efflux ATP-binding/permease protein Rv0194 from Mycobacterium tuberculosis (strain ATCC 25618 / H37Rv).